Here is a 186-residue protein sequence, read N- to C-terminus: Chromophore lyase CpcS/CpeS 1 (186 aa).

The protein belongs to the CpcS/CpeS biliprotein lyase family.

Covalently attaches a chromophore to Cys residue(s) of phycobiliproteins. The protein is Chromophore lyase CpcS/CpeS 1 of Synechocystis sp. (strain ATCC 27184 / PCC 6803 / Kazusa).